A 1003-amino-acid polypeptide reads, in one-letter code: Phosphoenolpyruvate carboxylase (1003 aa).

The disordered stretch occupies residues 1–24; it reads MIMTVSDPGGSSMSSSSAITPESE. Residues histidine 190 and lysine 646 contribute to the active site.

It belongs to the PEPCase type 1 family. It depends on Mg(2+) as a cofactor.

The enzyme catalyses oxaloacetate + phosphate = phosphoenolpyruvate + hydrogencarbonate. In terms of biological role, forms oxaloacetate, a four-carbon dicarboxylic acid source for the tricarboxylic acid cycle. The chain is Phosphoenolpyruvate carboxylase from Synechococcus sp. (strain WH7803).